A 240-amino-acid polypeptide reads, in one-letter code: UDP-2,3-diacylglucosamine hydrolase (240 aa).

Mn(2+) is bound by residues Asp-8, His-10, Asp-41, Asn-79, and His-114. 79–80 contacts substrate; sequence NR. The substrate site is built by Asp-122, Ser-160, Asn-164, Lys-167, and His-195. His-195 and His-197 together coordinate Mn(2+).

It belongs to the LpxH family. Requires Mn(2+) as cofactor.

Its subcellular location is the cell inner membrane. The enzyme catalyses UDP-2-N,3-O-bis[(3R)-3-hydroxytetradecanoyl]-alpha-D-glucosamine + H2O = 2-N,3-O-bis[(3R)-3-hydroxytetradecanoyl]-alpha-D-glucosaminyl 1-phosphate + UMP + 2 H(+). It participates in glycolipid biosynthesis; lipid IV(A) biosynthesis; lipid IV(A) from (3R)-3-hydroxytetradecanoyl-[acyl-carrier-protein] and UDP-N-acetyl-alpha-D-glucosamine: step 4/6. In terms of biological role, hydrolyzes the pyrophosphate bond of UDP-2,3-diacylglucosamine to yield 2,3-diacylglucosamine 1-phosphate (lipid X) and UMP by catalyzing the attack of water at the alpha-P atom. Involved in the biosynthesis of lipid A, a phosphorylated glycolipid that anchors the lipopolysaccharide to the outer membrane of the cell. The sequence is that of UDP-2,3-diacylglucosamine hydrolase from Shigella boydii serotype 18 (strain CDC 3083-94 / BS512).